We begin with the raw amino-acid sequence, 123 residues long: MRSFLVIATLAVGAFGQSYDPCPNDLKNHALCCNAGLENLINFDCHTRKFDSLLPPFQATCARTGSYPKCCTIKIISQGLLCEDPAGVENPDTDTFNPEGDNELENLLDDVGNILNEVLNLLN.

Positions M1–G16 are cleaved as a signal peptide. 4 disulfide bridges follow: C22/C70, C32/C61, C33/C45, and C71/C82.

This sequence belongs to the cerato-ulmin hydrophobin family. Homodimer. Homodimers further self-assemble to form highly ordered films at water-air interfaces through intermolecular interactions.

It localises to the secreted. Its subcellular location is the cell wall. Functionally, aerial growth, conidiation, and dispersal of filamentous fungi in the environment rely upon a capability of their secreting small amphipathic proteins called hydrophobins (HPBs) with low sequence identity. Class I can self-assemble into an outermost layer of rodlet bundles on aerial cell surfaces, conferring cellular hydrophobicity that supports fungal growth, development and dispersal; whereas Class II form highly ordered films at water-air interfaces through intermolecular interactions but contribute nothing to the rodlet structure. Hyd2 is a class II hydrophobin that plays probably a role in intraspecific signaling or hyphal fusion. Not necessary for root adhesion and colonization. Might play an essential role since no deletion mutants could be obtained. This chain is Class II hydrophobin 2, found in Bionectria ochroleuca (Gliocladium roseum).